The sequence spans 357 residues: GTPase Obg (357 aa).

In terms of domain architecture, Obg spans 1 to 158 (MFVDNIKLKV…LEIVLELKLI (158 aa)). The region spanning 159–345 (ADVGLVGFPN…LKFALFDLVE (187 aa)) is the OBG-type G domain. GTP contacts are provided by residues 165-172 (GFPNAGKS), 190-194 (FTTLT), 212-215 (DIPG), 280-283 (TKCD), and 326-328 (SSV). Mg(2+) is bound by residues S172 and T192.

The protein belongs to the TRAFAC class OBG-HflX-like GTPase superfamily. OBG GTPase family. In terms of assembly, monomer. The cofactor is Mg(2+).

It localises to the cytoplasm. In terms of biological role, an essential GTPase which binds GTP, GDP and possibly (p)ppGpp with moderate affinity, with high nucleotide exchange rates and a fairly low GTP hydrolysis rate. Plays a role in control of the cell cycle, stress response, ribosome biogenesis and in those bacteria that undergo differentiation, in morphogenesis control. The polypeptide is GTPase Obg (Nautilia profundicola (strain ATCC BAA-1463 / DSM 18972 / AmH)).